The chain runs to 122 residues: UPF0145 protein BceJ2315_57450 (122 aa).

Belongs to the UPF0145 family.

The polypeptide is UPF0145 protein BceJ2315_57450 (Burkholderia cenocepacia (strain ATCC BAA-245 / DSM 16553 / LMG 16656 / NCTC 13227 / J2315 / CF5610) (Burkholderia cepacia (strain J2315))).